Consider the following 280-residue polypeptide: Phosphatidylserine decarboxylase proenzyme (280 aa).

Catalysis depends on charge relay system; for autoendoproteolytic cleavage activity residues D86, H143, and S246. The Schiff-base intermediate with substrate; via pyruvic acid; for decarboxylase activity role is filled by S246. S246 bears the Pyruvic acid (Ser); by autocatalysis mark.

This sequence belongs to the phosphatidylserine decarboxylase family. PSD-B subfamily. Prokaryotic type I sub-subfamily. In terms of assembly, heterodimer of a large membrane-associated beta subunit and a small pyruvoyl-containing alpha subunit. The cofactor is pyruvate. Is synthesized initially as an inactive proenzyme. Formation of the active enzyme involves a self-maturation process in which the active site pyruvoyl group is generated from an internal serine residue via an autocatalytic post-translational modification. Two non-identical subunits are generated from the proenzyme in this reaction, and the pyruvate is formed at the N-terminus of the alpha chain, which is derived from the carboxyl end of the proenzyme. The autoendoproteolytic cleavage occurs by a canonical serine protease mechanism, in which the side chain hydroxyl group of the serine supplies its oxygen atom to form the C-terminus of the beta chain, while the remainder of the serine residue undergoes an oxidative deamination to produce ammonia and the pyruvoyl prosthetic group on the alpha chain. During this reaction, the Ser that is part of the protease active site of the proenzyme becomes the pyruvoyl prosthetic group, which constitutes an essential element of the active site of the mature decarboxylase.

Its subcellular location is the cell membrane. It carries out the reaction a 1,2-diacyl-sn-glycero-3-phospho-L-serine + H(+) = a 1,2-diacyl-sn-glycero-3-phosphoethanolamine + CO2. It functions in the pathway phospholipid metabolism; phosphatidylethanolamine biosynthesis; phosphatidylethanolamine from CDP-diacylglycerol: step 2/2. In terms of biological role, catalyzes the formation of phosphatidylethanolamine (PtdEtn) from phosphatidylserine (PtdSer). The chain is Phosphatidylserine decarboxylase proenzyme from Brevibacillus brevis (strain 47 / JCM 6285 / NBRC 100599).